Reading from the N-terminus, the 193-residue chain is Probable molybdenum cofactor guanylyltransferase (193 aa).

GTP contacts are provided by residues 9–11 (TAG), lysine 21, aspartate 64, and aspartate 93. Mg(2+) is bound at residue aspartate 93.

It belongs to the MobA family. It depends on Mg(2+) as a cofactor.

The protein localises to the cytoplasm. It carries out the reaction Mo-molybdopterin + GTP + H(+) = Mo-molybdopterin guanine dinucleotide + diphosphate. Transfers a GMP moiety from GTP to Mo-molybdopterin (Mo-MPT) cofactor (Moco or molybdenum cofactor) to form Mo-molybdopterin guanine dinucleotide (Mo-MGD) cofactor. This chain is Probable molybdenum cofactor guanylyltransferase, found in Deinococcus radiodurans (strain ATCC 13939 / DSM 20539 / JCM 16871 / CCUG 27074 / LMG 4051 / NBRC 15346 / NCIMB 9279 / VKM B-1422 / R1).